The sequence spans 117 residues: Zinc metalloproteinase/disintegrin (117 aa).

Positions Thr-36 to Ala-117 constitute a Disintegrin domain. Cystine bridges form between Cys-50-Cys-65, Cys-52-Cys-60, Cys-59-Cys-82, Cys-73-Cys-79, Cys-78-Cys-103, and Cys-91-Cys-110. The Cell attachment site motif lies at Arg-95 to Asp-97.

The protein belongs to the venom metalloproteinase (M12B) family. P-II subfamily. P-IIa sub-subfamily. As to quaternary structure, monomer. Requires Zn(2+) as cofactor. As to expression, expressed by the venom gland.

Its subcellular location is the secreted. In terms of biological role, impairs hemostasis in the envenomed animal. Functionally, inhibits platelet aggregation and bone resorption. In Gloydius halys (Chinese water mocassin), this protein is Zinc metalloproteinase/disintegrin.